The sequence spans 40 residues: MADTTGRIPLWLIGTVTGIPVIGLIGIFFYGSYSGLGSSL.

The helical transmembrane segment at 8–28 (IPLWLIGTVTGIPVIGLIGIF) threads the bilayer.

The protein belongs to the PsbJ family. In terms of assembly, PSII is composed of 1 copy each of membrane proteins PsbA, PsbB, PsbC, PsbD, PsbE, PsbF, PsbH, PsbI, PsbJ, PsbK, PsbL, PsbM, PsbT, PsbX, PsbY, PsbZ, Psb30/Ycf12, at least 3 peripheral proteins of the oxygen-evolving complex and a large number of cofactors. It forms dimeric complexes.

The protein localises to the plastid. It localises to the chloroplast thylakoid membrane. One of the components of the core complex of photosystem II (PSII). PSII is a light-driven water:plastoquinone oxidoreductase that uses light energy to abstract electrons from H(2)O, generating O(2) and a proton gradient subsequently used for ATP formation. It consists of a core antenna complex that captures photons, and an electron transfer chain that converts photonic excitation into a charge separation. This is Photosystem II reaction center protein J from Vitis vinifera (Grape).